The chain runs to 136 residues: Small nuclear ribonucleoprotein Sm D3 (136 aa).

The Sm domain maps to 6-78 (VPIKILHEAE…IRFMILPDML (73 aa)). The interval 98-136 (GLGGLDQRGRGRGTAFRRPMGRGGPRGMSRPGGAPTFRG) is disordered.

It belongs to the snRNP core protein family.

Its subcellular location is the nucleus. It localises to the cytoplasm. The protein localises to the cytosol. Functionally, plays a role in pre-mRNA splicing as a core component of the spliceosomal U1, U2, U4 and U5 small nuclear ribonucleoproteins (snRNPs), the building blocks of the spliceosome. In Caenorhabditis elegans, this protein is Small nuclear ribonucleoprotein Sm D3 (snr-1).